The chain runs to 293 residues: Short-chain dehydrogenase/reductase PhomF (293 aa).

Ile31 and Asn102 together coordinate NADP(+). The Proton donor role is filled by Ser175. NADP(+)-binding residues include Tyr190, Lys194, and Ser225. Tyr190 acts as the Proton acceptor in catalysis. Residue Lys194 is the Lowers pKa of active site Tyr of the active site.

This sequence belongs to the short-chain dehydrogenases/reductases (SDR) family.

In terms of biological role, short-chain dehydrogenase/reductase; part of the gene cluster that mediates the biosynthesis of the phomopsins, a group of hexapeptide mycotoxins which infects lupins and causes lupinosis disease in livestock. The role of phomF within the phomopsins biosynthesis pathway has still to be determined. The pathway starts with the processing of the precursor phomA by several endopeptidases including kexin proteases as well as the cluster-specific S41 family peptidase phomP1 and the oligopeptidase phomG to produce 10 identical copies of the hexapeptide Tyr-Val-Ile-Pro-Ile-Asp. After being excised from the precursor peptide, the core peptides are cyclized and modified post-translationally by enzymes encoded within the gene cluster. The timing and order of proteolysis of the phomA precursor and PTMs are still unknown. Two tyrosinase-like enzymes, phomQ1 and phomQ2, catalyze the chlorination and hydroxylation of Tyr, respectively. PhomYb, is proposed to be involved in the construction of the macrocyclic structure. The other 4 ustYa family proteins may be involved in PTMs that generate the unique structure of phomopsin A. PhomYa is required for the hydroxylation of C-beta of Tyr. PhomYc, phomYd, and phomYe are responsible for the biosynthesis of 2,3-dehydroisoleucine (dIle), 2,3-dehydroaspartic acid (dAsp), and 3,4-dehydroproline (dPro), respectively. While dIle formation by phomYc is indispensable for the installation of dAsp by phomYd, the order of the other PTMs have not been elucidated yet. Most of the biosynthetic enzymes likely have broad substrate specificity, and thus, there might be a metabolic grid from a precursor to phomopsin A. The enzyme(s) responsible for the biosynthesis of 3,4-dehydrovaline (dVal) have also not been identified yet. Finally, phomM acts as an S-adenosylmethionine-dependent alpha-N-methyltransferase that catalyzes two successive N-methylation reactions, converting N-desmethyl-phomopsin A to phomopsin A and phomopsin A further to an N,N-dimethylated congener called phomopsin E. This Diaporthe leptostromiformis (Lupinosis disease fungus) protein is Short-chain dehydrogenase/reductase PhomF.